Consider the following 188-residue polypeptide: Transmembrane protein 160 (188 aa).

A mitochondrion-targeting transit peptide spans 1–96 (MGGGWWWARV…ISFMQSDMGR (96 aa)). Residues 21 to 53 (SLQPPQRPRSGGARGSFAPGHGPRAGASPPPVS) form a disordered region. Residue serine 48 is modified to Phosphoserine. The next 2 helical transmembrane spans lie at 102 to 122 (FFLL…VGLA) and 135 to 155 (AAAG…AVGL). The disordered stretch occupies residues 168-188 (PEDDGAASTEGPDEAGRPPPE).

It belongs to the TMEM160 family. In terms of tissue distribution, expressed in peripheral sensory neurons of dorsal root ganglia (DRG).

The protein resides in the mitochondrion inner membrane. This is Transmembrane protein 160 from Mus musculus (Mouse).